We begin with the raw amino-acid sequence, 228 residues long: Protein GrpE (228 aa).

Residues 1–22 (MDDKQKTNEEVKASSFDSEKSS) show a composition bias toward basic and acidic residues. The tract at residues 1-71 (MDDKQKTNEE…DQTNTNNNEL (71 aa)) is disordered. Over residues 38-53 (QNVQHDNGSNPAQKQN) the composition is skewed to polar residues.

This sequence belongs to the GrpE family. In terms of assembly, homodimer.

It localises to the cytoplasm. Its function is as follows. Participates actively in the response to hyperosmotic and heat shock by preventing the aggregation of stress-denatured proteins, in association with DnaK and GrpE. It is the nucleotide exchange factor for DnaK and may function as a thermosensor. Unfolded proteins bind initially to DnaJ; upon interaction with the DnaJ-bound protein, DnaK hydrolyzes its bound ATP, resulting in the formation of a stable complex. GrpE releases ADP from DnaK; ATP binding to DnaK triggers the release of the substrate protein, thus completing the reaction cycle. Several rounds of ATP-dependent interactions between DnaJ, DnaK and GrpE are required for fully efficient folding. The polypeptide is Protein GrpE (Coprothermobacter proteolyticus (strain ATCC 35245 / DSM 5265 / OCM 4 / BT)).